The following is a 405-amino-acid chain: MAFLFRIRTSEFILQKATQFRLKSSSSSIFTLKSLTSKQKKSRDTLSLLKSENNPDRILEICRSTSLSPDYHVDRIIFSVAVVTLAREKHFVAVSQLLDGFIQNQPDPKSESFAVRAIILYGRANMLDRSIQTFRNLEQYEIPRTVKSLNALLFACLMAKDYKEANRVYLEMPKMYGIEPDLETYNRMIRVLCESGSTSSSYSIVAEMERKWIKPTAASFGLMIDGFYKEEKFDEVRKVMRMMDEFGVHVGVATYNIMIQCLCKRKKSAEAKALIDGVMSCRMRPNSVTYSLLIHGFCSEENLDEAMNLFEVMVCNGYKPDSECYFTLIHCLCKGGDFETALILCRESMEKNWVPSFSVMKWLVNGLASRSKVDEAKELIAVVKEKFTRNVDLWNEVEAALPLPQ.

The N-terminal 72 residues, 1–72 (MAFLFRIRTS…RSTSLSPDYH (72 aa)), are a transit peptide targeting the mitochondrion. 9 PPR repeats span residues 74-108 (DRII…QPDP), 110-144 (SESF…EIPR), 145-180 (TVKS…GIEP), 181-215 (DLET…WIKP), 216-250 (TAAS…GVHV), 251-285 (GVAT…RMRP), 286-320 (NSVT…GYKP), 321-355 (DSEC…NWVP), and 356-386 (SFSV…VKEK).

The protein belongs to the PPR family. P subfamily.

It localises to the mitochondrion. This is Pentatricopeptide repeat-containing protein At1g11630, mitochondrial from Arabidopsis thaliana (Mouse-ear cress).